Reading from the N-terminus, the 208-residue chain is Large ribosomal subunit protein uL3 (208 aa).

It belongs to the universal ribosomal protein uL3 family. Part of the 50S ribosomal subunit. Forms a cluster with proteins L14 and L19.

Functionally, one of the primary rRNA binding proteins, it binds directly near the 3'-end of the 23S rRNA, where it nucleates assembly of the 50S subunit. This Salinibacter ruber (strain DSM 13855 / M31) protein is Large ribosomal subunit protein uL3.